The chain runs to 1090 residues: ATP-dependent helicase/deoxyribonuclease subunit B (1090 aa).

7–14 (GPVGSGKS) contributes to the ATP binding site. Residues Cys-719, Cys-1035, Cys-1038, and Cys-1044 each contribute to the [4Fe-4S] cluster site.

This sequence belongs to the helicase family. AddB/RexB type 1 subfamily. In terms of assembly, heterodimer of AddA and AddB. The cofactor is Mg(2+). It depends on [4Fe-4S] cluster as a cofactor.

The heterodimer acts as both an ATP-dependent DNA helicase and an ATP-dependent, dual-direction single-stranded exonuclease. Recognizes the chi site generating a DNA molecule suitable for the initiation of homologous recombination. The AddB subunit has 5' -&gt; 3' nuclease activity but not helicase activity. This Carboxydothermus hydrogenoformans (strain ATCC BAA-161 / DSM 6008 / Z-2901) protein is ATP-dependent helicase/deoxyribonuclease subunit B.